Reading from the N-terminus, the 2148-residue chain is Polyketide synthase 1 (2148 aa).

Residues 19–261 (FIFGDQSSCN…TPLAVHAPYH (243 aa)) form an N-terminal acylcarrier protein transacylase domain (SAT) region. The region spanning 394-829 (ESKIAIIGMS…GGNTALLVED (436 aa)) is the Ketosynthase family 3 (KS3) domain. Residues Cys-566, His-701, and His-745 each act as for beta-ketoacyl synthase activity in the active site. The tract at residues 929 to 1233 (AFVFSGQGSQ…PSLMRNKDGW (305 aa)) is malonyl-CoA:ACP transacylase (MAT) domain. The For acyl/malonyl transferase activity role is filled by Ser-1018. The tract at residues 1310-1624 (TASVHRIVHE…RKVLNTAMPP (315 aa)) is product template (PT) domain. Positions 1314-1447 (HRIVHESVDK…SSLHFEQPKV (134 aa)) are N-terminal hotdog fold. The 306-residue stretch at 1314–1619 (HRIVHESVDK…FQGIPRKVLN (306 aa)) folds into the PKS/mFAS DH domain. The Proton acceptor; for dehydratase activity role is filled by His-1346. Positions 1474-1619 (LNSRMSSGVI…FQGIPRKVLN (146 aa)) are C-terminal hotdog fold. Asp-1533 serves as the catalytic Proton donor; for dehydratase activity. A disordered region spans residues 1619-1657 (NTAMPPPKSQNEAPVRSAPAKPAAKPPKSASSEHSGHFA). Positions 1635 to 1650 (SAPAKPAAKPPKSASS) are enriched in low complexity. The Carrier 1 domain maps to 1678–1752 (RNPMLAVFKI…DLATHLGLDT (75 aa)). Ser-1712 is modified (O-(pantetheine 4'-phosphoryl)serine). Positions 1755–1790 (SDQSSGQSSSSGGLSPRSDSIGEITSSATTPPSLSP) are enriched in low complexity. The interval 1755-1796 (SDQSSGQSSSSGGLSPRSDSIGEITSSATTPPSLSPRGSVSG) is disordered. One can recognise a Carrier 2 domain in the interval 1793–1870 (SVSGSQCKDV…SFKHMFQQGH (78 aa)). Residue Ser-1830 is modified to O-(pantetheine 4'-phosphoryl)serine. The thioesterase (TE) domain stretch occupies residues 1882-2146 (LKQYRATSTL…ERVAAFIRST (265 aa)). Catalysis depends on Ser-1973, which acts as the For thioesterase activity.

Its function is as follows. Polyketide synthase; part of the Pks1 gene cluster that mediates the biosynthesis of an anthraquinone derivative pigment that contributes to conidial pigmentation that provides protection from UV radiation, heat and cold stress. The polyketide synthase Pks1 produces 1-acetyl-2,4,6,8-tetrahydroxy-9,10-anthraquinone though condensation of acetyl-CoA with malonyl-CoA. The dehydratase EthD and the laccase Mlac1 further convert the anthraquinone derivative into the final conidial pigment. The polypeptide is Polyketide synthase 1 (Metarhizium guizhouense (strain ARSEF 977)).